The chain runs to 177 residues: Ribosome maturation factor RimM (177 aa).

A PRC barrel domain is found at 98–177 (GEEFYWRELY…RIEVDWDPGF (80 aa)).

It belongs to the RimM family. In terms of assembly, binds ribosomal protein uS19.

It localises to the cytoplasm. An accessory protein needed during the final step in the assembly of 30S ribosomal subunit, possibly for assembly of the head region. Essential for efficient processing of 16S rRNA. May be needed both before and after RbfA during the maturation of 16S rRNA. It has affinity for free ribosomal 30S subunits but not for 70S ribosomes. The protein is Ribosome maturation factor RimM of Photobacterium profundum (strain SS9).